The following is a 40-amino-acid chain: Dolichyl-diphosphooligosaccharide--protein glycosyltransferase subunit 4 (40 aa).

At 1–4 the chain is on the lumenal side; the sequence is MITD. A helical transmembrane segment spans residues 5–25; that stretch reads VQLAIFSNVLGVFLFLLVVAY. Over 26–40 the chain is Cytoplasmic; the sequence is HYINANTGKSSIKTK.

The protein belongs to the OST4 family. As to quaternary structure, component of the oligosaccharyltransferase (OST) complex.

Its subcellular location is the endoplasmic reticulum membrane. Functionally, subunit of the oligosaccharyl transferase (OST) complex that catalyzes the initial transfer of a defined glycan (Glc(3)Man(9)GlcNAc(2) in eukaryotes) from the lipid carrier dolichol-pyrophosphate to an asparagine residue within an Asn-X-Ser/Thr consensus motif in nascent polypeptide chains, the first step in protein N-glycosylation. N-glycosylation occurs cotranslationally and the complex associates with the Sec61 complex at the channel-forming translocon complex that mediates protein translocation across the endoplasmic reticulum (ER). All subunits are required for a maximal enzyme activity. The chain is Dolichyl-diphosphooligosaccharide--protein glycosyltransferase subunit 4 from Drosophila virilis (Fruit fly).